Consider the following 149-residue polypeptide: NPC intracellular cholesterol transporter 2 (149 aa).

Positions 1 to 19 (MHFLAAAFLLLTLSASALA) are cleaved as a signal peptide. Cystine bridges form between Cys27–Cys140, Cys42–Cys47, and Cys93–Cys99. An N-linked (GlcNAc...) asparagine glycan is attached at Asn58. Lys116 carries the post-translational modification N6-acetyllysine.

It belongs to the NPC2 family. Interacts with NPC1 (via the second lumenal domain) in a cholestrol-dependent manner. Interacts with NUS1/NgBR, the interaction stabilizes NCP2 and regulates cholesterol trafficking. Interacts with DHDDS. Interacts with NEDD4L (via C2 domain). Interacts with NPC1L1. N-glycosylated. Found in the epididymal fluid as a 19 kDa glycoprotein that is processed during its passage through the epididymis into a 16 kDa protein. Found in the fluid from the distal caput to cauda epididymis, not detected in the rete testis and the proximal and middle caput epididymal fluids (at protein level).

It is found in the secreted. It localises to the endoplasmic reticulum. The protein resides in the lysosome. The catalysed reaction is cholesterol(in) = cholesterol(out). Its function is as follows. Intracellular cholesterol transporter which acts in concert with NPC1 and plays an important role in the egress of cholesterol from the lysosomal compartment. Unesterified cholesterol that has been released from LDLs in the lumen of the late endosomes/lysosomes is transferred by NPC2 to the cholesterol-binding pocket in the N-terminal domain of NPC1. May bind and mobilize cholesterol that is associated with membranes. NPC2 binds cholesterol with a 1:1 stoichiometry. Can bind a variety of sterols, including lathosterol, desmosterol and the plant sterols stigmasterol and beta-sitosterol. The secreted form of NCP2 regulates biliary cholesterol secretion via stimulation of ABCG5/ABCG8-mediated cholesterol transport. The sequence is that of NPC intracellular cholesterol transporter 2 from Sus scrofa (Pig).